Here is a 486-residue protein sequence, read N- to C-terminus: Probable peptidoglycan glycosyltransferase FtsW (486 aa).

The Cytoplasmic portion of the chain corresponds to 1–50; it reads MAGAARDRAFLDHFGGAGADRPCHVEGALMNDMSRQATRLDAIGGRYDPW. Residues 51–71 traverse the membrane as a helical segment; sequence LLGAAVTLASLGVVMVASSSI. Topologically, residues 72–77 are periplasmic; sequence ELEASP. The chain crosses the membrane as a helical span at residues 78–98; that stretch reads FYYLTRHLLFLGGGIALAFWA. Residues 99 to 112 lie on the Cytoplasmic side of the membrane; sequence MRTELKTIEQHNQM. The helical transmembrane segment at 113-133 threads the bilayer; that stretch reads LLLACFVLLVVVFVPGLGSTV. Residues 134–141 lie on the Periplasmic side of the membrane; the sequence is NGAKRWIN. The chain crosses the membrane as a helical span at residues 142 to 162; sequence LGVSRFQVVESVKVFYIIWLA. Over 163-174 the chain is Cytoplasmic; sequence SYLVRFRDEVNA. Residues 175 to 195 traverse the membrane as a helical segment; the sequence is TWQAMLKPVFVVGLLVGLLLL. Residues 196–199 are Periplasmic-facing; the sequence is QPDF. Residues 200-220 form a helical membrane-spanning segment; sequence GSSMLLLSVTACMLVLGGAPI. At 221–222 the chain is on the cytoplasmic side; that stretch reads GR. The chain crosses the membrane as a helical span at residues 223–243; that stretch reads IILPILLLLPALVALVIFEPY. Over 244–298 the chain is Periplasmic; the sequence is RMRRVTSFMDPWVDQLGSGYQLSNALMAIGRGQWTGVGLGASVQKLNYLPESHTD. The helical transmembrane segment at 299–319 threads the bilayer; it reads FIFSVIAEELGFVGVCGVIGL. The Cytoplasmic portion of the chain corresponds to 320 to 342; that stretch reads YALLVGRAFWLGMRCVEMKRHFS. A helical transmembrane segment spans residues 343–363; the sequence is GYIAFGIGLWIAMQSFVSIGV. Over 364–374 the chain is Periplasmic; sequence NLGILPTKGLT. A helical membrane pass occupies residues 375–395; sequence LPLISSGGSSVLMTCLAMGVL. Residues 396-486 lie on the Cytoplasmic side of the membrane; sequence LRVSYEADRA…RVEPTFGRIA (91 aa).

The protein belongs to the SEDS family. FtsW subfamily.

It localises to the cell inner membrane. It carries out the reaction [GlcNAc-(1-&gt;4)-Mur2Ac(oyl-L-Ala-gamma-D-Glu-L-Lys-D-Ala-D-Ala)](n)-di-trans,octa-cis-undecaprenyl diphosphate + beta-D-GlcNAc-(1-&gt;4)-Mur2Ac(oyl-L-Ala-gamma-D-Glu-L-Lys-D-Ala-D-Ala)-di-trans,octa-cis-undecaprenyl diphosphate = [GlcNAc-(1-&gt;4)-Mur2Ac(oyl-L-Ala-gamma-D-Glu-L-Lys-D-Ala-D-Ala)](n+1)-di-trans,octa-cis-undecaprenyl diphosphate + di-trans,octa-cis-undecaprenyl diphosphate + H(+). It participates in cell wall biogenesis; peptidoglycan biosynthesis. Peptidoglycan polymerase that is essential for cell division. This chain is Probable peptidoglycan glycosyltransferase FtsW, found in Xanthomonas oryzae pv. oryzae (strain KACC10331 / KXO85).